We begin with the raw amino-acid sequence, 957 residues long: Mediator of RNA polymerase II transcription subunit 16 (957 aa).

Positions 855–883 (YTEVDAAPSGKTNAQGPPQQPQPQQQRRR) are disordered.

It belongs to the Mediator complex subunit 16 family. In terms of assembly, component of the Mediator complex.

It localises to the nucleus. Functionally, component of the Mediator complex, a coactivator involved in the regulated transcription of nearly all RNA polymerase II-dependent genes. Mediator functions as a bridge to convey information from gene-specific regulatory proteins to the basal RNA polymerase II transcription machinery. Mediator is recruited to promoters by direct interactions with regulatory proteins and serves as a scaffold for the assembly of a functional preinitiation complex with RNA polymerase II and the general transcription factors. The polypeptide is Mediator of RNA polymerase II transcription subunit 16 (sin4) (Aspergillus clavatus (strain ATCC 1007 / CBS 513.65 / DSM 816 / NCTC 3887 / NRRL 1 / QM 1276 / 107)).